A 353-amino-acid polypeptide reads, in one-letter code: Photosystem II protein D1 (353 aa).

Threonine 2 carries the N-acetylthreonine modification. Position 2 is a phosphothreonine (threonine 2). The next 3 helical transmembrane spans lie at 29 to 46 (YIGW…TATS), 118 to 133 (HFLL…EWEL), and 142 to 156 (WIAV…AAAA). Histidine 118 lines the chlorophyll a pocket. Residue tyrosine 126 coordinates pheophytin a. [CaMn4O5] cluster contacts are provided by aspartate 170 and glutamate 189. A helical membrane pass occupies residues 197 to 218 (FHMLGVAGVFGGSLFSAMHGSL). Histidine 198 provides a ligand contact to chlorophyll a. Residues histidine 215 and 264-265 (SF) each bind a quinone. Histidine 215 contacts Fe cation. Histidine 272 contacts Fe cation. The helical transmembrane segment at 274-288 (FLAAWPVVGIWFTAL) threads the bilayer. Histidine 332, glutamate 333, aspartate 342, and alanine 344 together coordinate [CaMn4O5] cluster. The propeptide occupies 345–353 (AVEAPSTNG).

Belongs to the reaction center PufL/M/PsbA/D family. PSII is composed of 1 copy each of membrane proteins PsbA, PsbB, PsbC, PsbD, PsbE, PsbF, PsbH, PsbI, PsbJ, PsbK, PsbL, PsbM, PsbT, PsbX, PsbY, PsbZ, Psb30/Ycf12, at least 3 peripheral proteins of the oxygen-evolving complex and a large number of cofactors. It forms dimeric complexes. The D1/D2 heterodimer binds P680, chlorophylls that are the primary electron donor of PSII, and subsequent electron acceptors. It shares a non-heme iron and each subunit binds pheophytin, quinone, additional chlorophylls, carotenoids and lipids. D1 provides most of the ligands for the Mn4-Ca-O5 cluster of the oxygen-evolving complex (OEC). There is also a Cl(-1) ion associated with D1 and D2, which is required for oxygen evolution. The PSII complex binds additional chlorophylls, carotenoids and specific lipids. serves as cofactor. In terms of processing, tyr-161 forms a radical intermediate that is referred to as redox-active TyrZ, YZ or Y-Z. Post-translationally, C-terminally processed by CTPA; processing is essential to allow assembly of the oxygen-evolving complex and thus photosynthetic growth.

It localises to the plastid. The protein resides in the chloroplast thylakoid membrane. The enzyme catalyses 2 a plastoquinone + 4 hnu + 2 H2O = 2 a plastoquinol + O2. In terms of biological role, photosystem II (PSII) is a light-driven water:plastoquinone oxidoreductase that uses light energy to abstract electrons from H(2)O, generating O(2) and a proton gradient subsequently used for ATP formation. It consists of a core antenna complex that captures photons, and an electron transfer chain that converts photonic excitation into a charge separation. The D1/D2 (PsbA/PsbD) reaction center heterodimer binds P680, the primary electron donor of PSII as well as several subsequent electron acceptors. This Nandina domestica (Heavenly bamboo) protein is Photosystem II protein D1.